The following is a 1197-amino-acid chain: MYVLLTILTSVLVCEAIIRVSLSSTREETCFGDSTNPEMIEGAWDSLREEEMPEELSCSISGIREVKTSSQELYRALKAIIAADGLNNITCHGKDPEDKISLIKGPPHKKRVGIVRCERRRDAKQIGRKTMAGIAMTVLPALAVFALAPVVFAEDPHLRNRPGKGHNYIDGMTQEDATCKPVTYAGACSSFDVLLEKGKFPLFQSYAHHRTLLEAVHDTIIAKADPPSCDLLSAHGNPCMKEKLVMKTHCPNDYQSAHHLNNDGKMASVKCPPKYELTEDCNFCRQMTGASLKKGSYPLQDLFCQSSEDDGSKLKTKMKGVCEVGVQALKKCDGQLSTAHEVVPFAVFKNSKKVYLDKLDLKTEENLLPDSFVCFEHKGQYKGTMDSGQTKRELKSFDISQCPKIGGHGSKKCTGDAAFCSAYECTAQYANAYCSHANGSGIVQIQVSGVWKKPLCVGYERVVVKRELSAKPIQRVEPCTTCITKCEPHGLVVRSTGFKISSAVACASGVCVTGSQSPSTEITLKYPGISQSSGGDIGVHMAHDDQSVSSKIVAHCPPQDPCLVHDCIVCAHGLINYQCHTALSAFVVVFVFSSIAIICLAILYRVLKCLKIAPRKVLNPLMWITAFIRWIYKKMVARVADNINQVNREIGWMEGGQLVLGNPAPIPRHAPIPRYSTYLMLLLIVSYASACSELIQASSRITTCSTEGVNTKCRLSGTALIRAGSVGAEACLMLKGVKEDQTKFLKLKTVSSELSCREGQSYWTGSFSPKCLSSRRCHLVGECHVNRCLSWRDNETSAEFSFVGESTTMRENKCFEQCGGWGCGCFNVNPSCLFVHTYLQSVRKEALRVFNCIDWVHKLTLEITDFDGSVSTIDLGASSSRFTNWGSVSLSLDAEGISGSNSFSFIESPGKGYAIVDEPFSEIPRQGFLGEIRCNSESSVLSAHESCLRAPNLISYKPMIDQLECTTNLIDPFVVFERGSLPQTRNDKTFAASKGNRGVQAFSKGSVQADLTLMFDNFEVDFVGAAVSCDAAFLNLTGCYSCNAGARVCLSITSTGTGSLSAHNKDGSLHIVLPSENGTKDQCQILHFTVPEVEEEFMYSCDGDERPLLVKGTLIAIDPFDDRREAGGESTVVNPKSGSWNFFDWFSGLMSWFGGPLKTILLICLYVALSIGLFFLLIYLGGTGLSKMWLAATKKAS.

The N-terminal stretch at 1–16 (MYVLLTILTSVLVCEA) is a signal peptide. Topologically, residues 17–130 (IIRVSLSSTR…RDAKQIGRKT (114 aa)) are cytoplasmic. Positions 131 to 153 (MAGIAMTVLPALAVFALAPVVFA) are internal signal sequence for glycoprotein N. Residues 154–582 (EDPHLRNRPG…GLINYQCHTA (429 aa)) lie on the Lumenal side of the membrane. Disulfide bonds link cysteine 179-cysteine 188, cysteine 229-cysteine 239, cysteine 250-cysteine 281, cysteine 271-cysteine 284, cysteine 304-cysteine 456, cysteine 322-cysteine 332, cysteine 374-cysteine 434, cysteine 402-cysteine 413, cysteine 420-cysteine 425, cysteine 479-cysteine 482, cysteine 486-cysteine 556, and cysteine 506-cysteine 511. The chain crosses the membrane as a helical span at residues 583-603 (LSAFVVVFVFSSIAIICLAIL). Topologically, residues 604 to 673 (YRVLKCLKIA…APIPRHAPIP (70 aa)) are cytoplasmic. The golgi retention signal stretch occupies residues 608–650 (KCLKIAPRKVLNPLMWITAFIRWIYKKMVARVADNINQVNREI). An important for correct targeting of the glycoproteins to the Golgi complex but not for heterodimerization region spans residues 646–650 (VNREI). Positions 675 to 690 (YSTYLMLLLIVSYASA) are internal signal sequence for glycoprotein C. Intrachain disulfides connect cysteine 691/cysteine 731, cysteine 704/cysteine 713, cysteine 756/cysteine 852, cysteine 771/cysteine 965, cysteine 777/cysteine 825, cysteine 783/cysteine 832, cysteine 788/cysteine 814, cysteine 818/cysteine 823, cysteine 934/cysteine 947, cysteine 1029/cysteine 1101, cysteine 1039/cysteine 1042, and cysteine 1049/cysteine 1083. The Lumenal segment spans residues 691-1159 (CSELIQASSR…MSWFGGPLKT (469 aa)). The fusion loop stretch occupies residues 777-783 (CHLVGEC). Asparagine 794 carries N-linked (GlcNAc...) asparagine; by host glycosylation. Residues 819–830 (GGWGCGCFNVNP) form a fusion loop region. N-linked (GlcNAc...) asparagine; by host glycosylation occurs at asparagine 1035. An N-linked (GlcNAc...) asparagine; by host glycan is attached at asparagine 1077. Residues 1160 to 1180 (ILLICLYVALSIGLFFLLIYL) form a helical membrane-spanning segment. Residues 1181-1197 (GGTGLSKMWLAATKKAS) lie on the Cytoplasmic side of the membrane.

It belongs to the phlebovirus envelope glycoprotein family. As to quaternary structure, heterodimer with glycoprotein C. Homotrimer (postfusion). Interacts with nucleocapsid protein N and with the polymerase L in order to package them into virus particles. Interacts with host E3 ubiquitin-protein ligase UBR4; this interaction is important for viral RNA production. Interacts with host LRP1; this interaction facilitates virus entry into the host cell. In terms of assembly, heterodimer with glycoprotein C. Specific enzymatic cleavages in vivo yield mature proteins including NSm protein, Glycoprotein C, and Glycoprotein N. In terms of processing, glycosylated. The glycans can attach to host CD209/DC-SIGN, and may play a role in virus entry into dendritic cells. Post-translationally, palmitoylated.

It localises to the virion membrane. The protein resides in the host Golgi apparatus membrane. It is found in the host endoplasmic reticulum membrane. The protein localises to the host mitochondrion outer membrane. Its subcellular location is the host Golgi apparatus. It localises to the virion. Structural component of the virion that interacts with glycoprotein C. It shields the hydrophobic fusion loops of the glycoprotein C, preventing premature fusion. The glycoprotein protrusions are arranged on an icosahedral lattice, with T=12 triangulation. They are able to attach the virion to the host cell receptor CD209/DC-SIGN and to promote fusion of membranes with the late endosome after endocytosis of the virion. Plays a role in the packaging of ribonucleoproteins and polymerase during virus assembly. In terms of biological role, structural component of the virion that interacts with glycoprotein N. Acts as a class II fusion protein that is activated upon acidification and subsequent repositioning of the glycoprotein N. The glycoprotein protrusions are arranged on an icosahedral lattice, with T=12 triangulation. They are able to attach the virion to the host cell receptor CD209/DC-SIGN and to promote fusion of membranes with the late endosome after endocytosis of the virion. Its function is as follows. Plays a role in the inhibition of virus-induced apoptosis. Plays a role for virus dissemination in vertebrates. Functionally, plays a role for virus dissemination in mosquitoes. May act as a structural virion protein in insects. This chain is Envelopment polyprotein (GP), found in Rift valley fever virus (strain ZH-548 M12) (RVFV).